We begin with the raw amino-acid sequence, 242 residues long: 2-C-methyl-D-erythritol 4-phosphate cytidylyltransferase (242 aa).

The protein belongs to the IspD/TarI cytidylyltransferase family. IspD subfamily.

It carries out the reaction 2-C-methyl-D-erythritol 4-phosphate + CTP + H(+) = 4-CDP-2-C-methyl-D-erythritol + diphosphate. It functions in the pathway isoprenoid biosynthesis; isopentenyl diphosphate biosynthesis via DXP pathway; isopentenyl diphosphate from 1-deoxy-D-xylulose 5-phosphate: step 2/6. Catalyzes the formation of 4-diphosphocytidyl-2-C-methyl-D-erythritol from CTP and 2-C-methyl-D-erythritol 4-phosphate (MEP). The polypeptide is 2-C-methyl-D-erythritol 4-phosphate cytidylyltransferase (Halorhodospira halophila (strain DSM 244 / SL1) (Ectothiorhodospira halophila (strain DSM 244 / SL1))).